The sequence spans 542 residues: Chaperonin GroEL 2 (542 aa).

ATP is bound by residues 30–33 (TLGP), K51, 87–91 (DGTTT), G415, and D496.

Belongs to the chaperonin (HSP60) family. In terms of assembly, forms a cylinder of 14 subunits composed of two heptameric rings stacked back-to-back. Interacts with the co-chaperonin GroES.

The protein resides in the cytoplasm. The catalysed reaction is ATP + H2O + a folded polypeptide = ADP + phosphate + an unfolded polypeptide.. Together with its co-chaperonin GroES, plays an essential role in assisting protein folding. The GroEL-GroES system forms a nano-cage that allows encapsulation of the non-native substrate proteins and provides a physical environment optimized to promote and accelerate protein folding. This is Chaperonin GroEL 2 from Azorhizobium caulinodans (strain ATCC 43989 / DSM 5975 / JCM 20966 / LMG 6465 / NBRC 14845 / NCIMB 13405 / ORS 571).